We begin with the raw amino-acid sequence, 359 residues long: Glucose 1-dehydrogenase (359 aa).

Cys-39 provides a ligand contact to Zn(2+). Thr-41 provides a ligand contact to substrate. Zn(2+) contacts are provided by His-64 and Glu-65. 2 residues coordinate substrate: Glu-116 and Glu-152. Residue Glu-152 coordinates Zn(2+). Residue 183-186 (AGPI) coordinates NADP(+).

It belongs to the zinc-containing alcohol dehydrogenase family. Glucose 1-dehydrogenase subfamily. Zn(2+) is required as a cofactor.

It carries out the reaction D-glucose + NAD(+) = D-glucono-1,5-lactone + NADH + H(+). The catalysed reaction is D-glucose + NADP(+) = D-glucono-1,5-lactone + NADPH + H(+). In terms of biological role, catalyzes the NAD(P)(+)-dependent oxidation of D-glucose to D-gluconate via gluconolactone. Can utilize both NAD(+) and NADP(+) as electron acceptor. Is involved in the degradation of glucose through a non-phosphorylative variant of the Entner-Doudoroff pathway. The polypeptide is Glucose 1-dehydrogenase (Methanocella arvoryzae (strain DSM 22066 / NBRC 105507 / MRE50)).